We begin with the raw amino-acid sequence, 122 residues long: Large ribosomal subunit protein uL14 (122 aa).

This sequence belongs to the universal ribosomal protein uL14 family. In terms of assembly, part of the 50S ribosomal subunit. Forms a cluster with proteins L3 and L19. In the 70S ribosome, L14 and L19 interact and together make contacts with the 16S rRNA in bridges B5 and B8.

Binds to 23S rRNA. Forms part of two intersubunit bridges in the 70S ribosome. This is Large ribosomal subunit protein uL14 from Desulforudis audaxviator (strain MP104C).